The following is an 854-amino-acid chain: Fibronectin-binding protein PlpA (854 aa).

Residues 1 to 24 show a composition bias toward low complexity; that stretch reads MDNNQNNFNQPGQQGFDQYQQQSG. The tract at residues 1–33 is disordered; sequence MDNNQNNFNQPGQQGFDQYQQQSGALVSYGYDA. The interval 91–109 is fibronectin-binding; it reads QYNQQQNQGYEQQYDEYGN. 4 disordered regions span residues 247 to 327, 411 to 434, 743 to 766, and 835 to 854; these read YEQE…LEAP, SSNN…EDSN, TINP…QLPP, and IQPS…YNNR. Positions 258 to 267 are enriched in basic and acidic residues; that stretch reads EPAHEQDLRE. Composition is skewed to polar residues over residues 311-320 and 411-428; these read TVNQPDQTPI and SSNN…TSNE. The stretch at 384–622 forms a coiled coil; sequence NLEEIQKVKL…SSFQKALSEV (239 aa). Pro residues predominate over residues 746-764; it reads PPQPQPQALPQPHPQPQQL.

Its subcellular location is the cell membrane. Its function is as follows. Binds immobilized fibronectin, specifically the gelatin/heparin-binding domain. This chain is Fibronectin-binding protein PlpA (plpA), found in Mycoplasmoides gallisepticum (strain R(low / passage 15 / clone 2)) (Mycoplasma gallisepticum).